Reading from the N-terminus, the 150-residue chain is Galectin-1 (150 aa).

The Galectin domain maps to 9–141 (NQIKLQDDFK…FSSPVTVDIH (133 aa)). A carbohydrate contacts are provided by H51, R55, N64, and E75.

In terms of assembly, homotetramer. Oligomerization is required for carbohydrate binding. As to expression, most abundant in fruiting bodies. Very low levels of expression in asexual vegetative mycelia.

The protein localises to the secreted. It is found in the extracellular space. Its subcellular location is the extracellular matrix. The protein resides in the cell wall. It localises to the endomembrane system. Functionally, binds lactose. May play a role in fruiting body formation. In Coprinopsis cinerea (strain Okayama-7 / 130 / ATCC MYA-4618 / FGSC 9003) (Inky cap fungus), this protein is Galectin-1 (Cgl1).